The following is a 584-amino-acid chain: 2-isopropylmalate synthase (584 aa).

The Pyruvate carboxyltransferase domain occupies P40–E314. Mg(2+) is bound by residues D49, H253, H255, and N289. Residues S456 to D584 form a regulatory domain region.

Belongs to the alpha-IPM synthase/homocitrate synthase family. LeuA type 2 subfamily. In terms of assembly, homodimer. Mg(2+) serves as cofactor.

The protein resides in the cytoplasm. It carries out the reaction 3-methyl-2-oxobutanoate + acetyl-CoA + H2O = (2S)-2-isopropylmalate + CoA + H(+). Its pathway is amino-acid biosynthesis; L-leucine biosynthesis; L-leucine from 3-methyl-2-oxobutanoate: step 1/4. In terms of biological role, catalyzes the condensation of the acetyl group of acetyl-CoA with 3-methyl-2-oxobutanoate (2-ketoisovalerate) to form 3-carboxy-3-hydroxy-4-methylpentanoate (2-isopropylmalate). The protein is 2-isopropylmalate synthase of Kocuria rhizophila (strain ATCC 9341 / DSM 348 / NBRC 103217 / DC2201).